The chain runs to 173 residues: Large ribosomal subunit protein uL10 (173 aa).

Belongs to the universal ribosomal protein uL10 family. In terms of assembly, part of the ribosomal stalk of the 50S ribosomal subunit. The N-terminus interacts with L11 and the large rRNA to form the base of the stalk. The C-terminus forms an elongated spine to which L12 dimers bind in a sequential fashion forming a multimeric L10(L12)X complex.

Forms part of the ribosomal stalk, playing a central role in the interaction of the ribosome with GTP-bound translation factors. In Bifidobacterium animalis subsp. lactis (strain AD011), this protein is Large ribosomal subunit protein uL10.